The chain runs to 531 residues: Cytochrome P450 monooxygenase ffsD (531 aa).

Residues Val-40–Val-60 form a helical membrane-spanning segment. Heme is bound at residue Cys-475.

The protein belongs to the cytochrome P450 family. Heme is required as a cofactor.

It localises to the membrane. It participates in mycotoxin biosynthesis. Functionally, cytochrome P450 monooxygenase; part of the gene cluster that mediates the biosynthesis of the cytotoxic leucine-containing cytochalasans, including aspochalasin C, aspochalasin E, TMC-169, flavichalasine F, aspergillin PZ, aspochalasin M and flavichalasine G. The first step in the pathway is catalyzed by the hybrid PKS-NRPS ffsA that utilizes 8 units of malonyl-CoA to iteratively assemble the octaketide chain before addition of L-leucine by the C-terminal NRPS modules. Because ffsA lacks a designated enoylreductase (ER) domain, the required activity is provided the enoyl reductase fssC. The methyltransferase (MT) domain of ffsA catalyzes the alpha-methylation at C10 and C14 using S-adenosyl-L-methionine as the methyl-donating cosubstrate. Reduction by the hydrolyase ffsE, followed by dehydration and intra-molecular Diels-Alder cyclization by the Diels-Alderase ffsF then yield the required isoindolone-fused macrocycle. A number of oxidative steps catalyzed by the tailoring cytochrome P450 monooxygenase ffsD, the FAD-linked oxidoreductase ffsJ and the short-chain dehydrogenase/reductase ffsI, are further required to afford the final products. In Aspergillus flavipes, this protein is Cytochrome P450 monooxygenase ffsD.